A 447-amino-acid polypeptide reads, in one-letter code: N-succinylarginine dihydrolase (447 aa).

Residues 19–28, asparagine 110, and 137–138 each bind substrate; these read AGLSFGNEAS and HR. Glutamate 174 is an active-site residue. Residue arginine 212 coordinates substrate. Histidine 248 is an active-site residue. Residues aspartate 250 and asparagine 359 each coordinate substrate. The active-site Nucleophile is cysteine 365.

This sequence belongs to the succinylarginine dihydrolase family. Homodimer.

It catalyses the reaction N(2)-succinyl-L-arginine + 2 H2O + 2 H(+) = N(2)-succinyl-L-ornithine + 2 NH4(+) + CO2. Its pathway is amino-acid degradation; L-arginine degradation via AST pathway; L-glutamate and succinate from L-arginine: step 2/5. Catalyzes the hydrolysis of N(2)-succinylarginine into N(2)-succinylornithine, ammonia and CO(2). This is N-succinylarginine dihydrolase from Salmonella paratyphi A (strain ATCC 9150 / SARB42).